The sequence spans 442 residues: 6-phospho-alpha-glucosidase 1 (442 aa).

6–72 contributes to the NAD(+) binding site; the sequence is FSVLIAGGGS…PEVEFLATTD (67 aa). Residues Arg95 and Asn149 each contribute to the substrate site. Cys171 serves as a coordination point for Mn(2+). The active-site Proton donor is Asp172. Residue His202 coordinates Mn(2+). The active-site Proton acceptor is the Tyr265. Arg285 serves as a coordination point for substrate.

Belongs to the glycosyl hydrolase 4 family. In terms of assembly, homodimer. May also form homotetramer. The cofactor is Mn(2+). Co(2+) serves as cofactor. Requires Ni(2+) as cofactor. It depends on Fe(2+) as a cofactor. Mg(2+) is required as a cofactor. The cofactor is NAD(+).

It carries out the reaction alpha-maltose 6'-phosphate + H2O = D-glucose 6-phosphate + D-glucose. With respect to regulation, is inhibited by EDTA in vitro. Functionally, is probably involved in the catabolism of alpha-glycosides accumulated via a phosphoenolpyruvate-dependent phosphotransferase system (PEP-PTS). Hydrolyzes a wide variety of 6-phospho-alpha-D-glucosides including the five isomeric derivatives of sucrose, i.e. trehalulose-6'-phosphate, turanose-6'-phosphate, maltulose-6'-phosphate, leucrose-6'-phosphate, and palatinose-6'-phosphate, but is not active on sucrose-6-phosphate. Can also hydrolyze maltose-6'-phosphate and methyl-alpha-glucose-6-phosphate, and poorly, trehalose-6-phosphate. Fails to hydrolyze beta-O-linked phosphorylated disaccharides such as cellobiose-6'-phosphate and gentiobiose-6'-phosphate. Does not seem to be involved in maltose catabolism. The protein is 6-phospho-alpha-glucosidase 1 (simA) of Lacticaseibacillus paracasei (strain ATCC 334 / BCRC 17002 / CCUG 31169 / CIP 107868 / KCTC 3260 / NRRL B-441) (Lactobacillus paracasei).